The following is a 503-amino-acid chain: Zinc finger protein JACKDAW (503 aa).

Positions 32 to 51 are enriched in low complexity; the sequence is IPDLNPNSNPNPNAKPNSSS. A disordered region spans residues 32–68; the sequence is IPDLNPNSNPNPNAKPNSSSAKKKRNQPGTPDPDADV. Ser-72 is modified (phosphoserine). 2 C2H2-type zinc fingers span residues 82 to 104 and 124 to 154; these read FVCEICNKGFQRDQNLQLHRRGH and YICPIKTCVHHDASRALGDLTGIKKHYSRKH. Short sequence motifs (nuclear localization signal) lie at residues 100–107 and 146–153; these read HRRGHNLP and IKKHYSRK. The C2H2-type 2; degenerate zinc finger occupies 159–182; it reads WKCEKCSKKYAVQSDWKAHAKTCG. The Zn(2+) site is built by Cys-161, Cys-164, His-177, Cys-181, Cys-188, Cys-190, His-203, and Cys-207. The segment at 186–209 adopts a CCHC-type 2; atypical zinc-finger fold; that stretch reads YKCDCGTLFSRKDSFITHRAFCDA. Residues 196-208 form an SHR-binding region; it reads RKDSFITHRAFCD. Disordered stretches follow at residues 301–417 and 432–465; these read SSSS…SSPM and RENHNRAPPPLSGVSTSSVDNNPFQSNRSGLNPA. The span at 319-358 shows a compositional bias: low complexity; sequence TSTNPSLTLSSSSTSQQTSASLQHQTLKDSSFSPLFSSSS. Polar residues predominate over residues 381-392; it reads MGSTRSNSSTAP. Residues 396 to 407 are compositionally biased toward low complexity; the sequence is AGPTMTSSSATA. The span at 444-465 shows a compositional bias: polar residues; that stretch reads GVSTSSVDNNPFQSNRSGLNPA.

Interacts with SHR, SCR, MGP and itself. The heterodimer with SHR involves its zinc fingers. Interacts with SIEL. Binds to RGA and SCL3 competitively in the nucleus. In terms of tissue distribution, expressed in the quiescent center, the ground tissue stem cells and to a lesser extent in mature cortex and endodermis cells.

Its subcellular location is the nucleus. In terms of biological role, transcription factor that, together with BIB, regulates tissue boundaries and asymmetric cell division by a rapid up-regulation of 'SCARECROW' (SCR), thus controlling the nuclear localization of 'SHORT-ROOT' (SHR) and restricting its action. Binds DNA via its zinc fingers. Recognizes and binds to SCL3 promoter sequence 5'-AGACAA-3' to promote its expression when in complex with RGA. Confines CYCD6 expression to the cortex-endodermis initial/daughter (CEI/CEID) tissues. Required for radial patterning and stem cell maintenance. Counteracted by 'MAGPIE' (MGP). Binds to the SCR and MGP promoter sequences. Controls position-dependent signals that regulate epidermal-cell-type patterning. This chain is Zinc finger protein JACKDAW, found in Arabidopsis thaliana (Mouse-ear cress).